The following is a 78-amino-acid chain: Translation initiation factor IF-1 (78 aa).

Positions 2–78 constitute an S1-like domain; the sequence is SKNNLNETES…TQARITYRFK (77 aa).

It belongs to the IF-1 family. Component of the 30S ribosomal translation pre-initiation complex which assembles on the 30S ribosome in the order IF-2 and IF-3, IF-1 and N-formylmethionyl-tRNA(fMet); mRNA recruitment can occur at any time during PIC assembly.

Its subcellular location is the cytoplasm. Functionally, one of the essential components for the initiation of protein synthesis. Stabilizes the binding of IF-2 and IF-3 on the 30S subunit to which N-formylmethionyl-tRNA(fMet) subsequently binds. Helps modulate mRNA selection, yielding the 30S pre-initiation complex (PIC). Upon addition of the 50S ribosomal subunit IF-1, IF-2 and IF-3 are released leaving the mature 70S translation initiation complex. The polypeptide is Translation initiation factor IF-1 (Aster yellows witches'-broom phytoplasma (strain AYWB)).